Reading from the N-terminus, the 265-residue chain is Regulator of calcineurin 2 (265 aa).

Phosphoserine occurs at positions 104 and 110. Disordered regions lie at residues 127–213 and 242–265; these read LLSI…DKSA and ENDVNATASNPPKSPSITVNEFFH. The residue at position 132 (Thr-132) is a Phosphothreonine. Low complexity-rich tracts occupy residues 141–161 and 182–202; these read SSSLNKGGSSLSPDKSSLESP and LSRSSSSTSNLSLNRSSQTSL. Phosphoserine is present on residues Ser-152, Ser-157, Ser-160, Ser-183, Ser-187, Ser-193, Ser-201, and Ser-255.

Phosphorylation of Ser-152 and Ser-160 is induced 2-fold in response to mating pheromone.

The protein localises to the cytoplasm. The sequence is that of Regulator of calcineurin 2 (RCN2) from Saccharomyces cerevisiae (strain ATCC 204508 / S288c) (Baker's yeast).